The primary structure comprises 299 residues: Putative cuticle collagen 155 (299 aa).

The signal sequence occupies residues 1–27 (MEFEQRIKAYRFVAYSAVAFSVVAVLS). Triple-helical region regions lie at residues 103-132 (GAAG…PGHP), 151-177 (GPPG…PGQD), 181-202 (GAPG…GAPG), and 216-278 (GAPG…VGEK). A disordered region spans residues 107–278 (PAGTPGKPGR…SGTPGGVGEK (172 aa)). The span at 129–161 (PGHPPQQPCDPITPPPCQPCPQGPPGPPGPPGP) shows a compositional bias: pro residues. Positions 163 to 172 (GDAGGNGNPG) are enriched in gly residues. The span at 173–197 (SPGQDGQPGAPGNKGPSGPNGNPGA) shows a compositional bias: low complexity. Over residues 215 to 233 (PGAPGPQGTPGPQGPPGQP) the composition is skewed to pro residues. Low complexity predominate over residues 250–268 (PNGNPGQPGADGNPGAPGQ).

Belongs to the cuticular collagen family. In terms of assembly, collagen polypeptide chains are complexed within the cuticle by disulfide bonds and other types of covalent cross-links.

Functionally, nematode cuticles are composed largely of collagen-like proteins. The cuticle functions both as an exoskeleton and as a barrier to protect the worm from its environment. In Caenorhabditis elegans, this protein is Putative cuticle collagen 155 (col-155).